We begin with the raw amino-acid sequence, 435 residues long: MEVKAKLLNTANAAAQTEVKASELNAKVENLAKKAAKNIKIDGFRKGKVPVAQVLKRYGKDLENDAKSEIFRDIVNESLKLIAKKSSDIIGEPMILKFDEKDGNIDIELEISFKPEVKVDGYEEIIPEYTTPKVTKKEIEEKINEFLKMIAPLEKVEKESLEKGDFAKFDFEGFVDGEAFEGGKAEGYLLEIGSGQFIPGFEDGMLGLKVGEQKDVNVTFPAEYGAAHLAGKSAVFKVKLHEIQGKKAGKLDEETLKKLMPNEENPTAEQLEDRIKEQIRADKFQKLLNEDLKPKFADKAVEKFKFDLPNNIVEQEIDMQFRSAWGNFSEDEMKKFREDKEALKKQRETYKNEAIKSVQLTFIIDELAKQKGITVSDNELLQAVYFEAYRYGIDPKEHLESYKKQGMLPAVKMAMIEEKLFNNLFKSGNREDKGE.

One can recognise a PPIase FKBP-type domain in the interval Gly164–Gly249.

The protein belongs to the FKBP-type PPIase family. Tig subfamily.

It is found in the cytoplasm. The enzyme catalyses [protein]-peptidylproline (omega=180) = [protein]-peptidylproline (omega=0). Involved in protein export. Acts as a chaperone by maintaining the newly synthesized protein in an open conformation. Functions as a peptidyl-prolyl cis-trans isomerase. This chain is Trigger factor, found in Campylobacter fetus subsp. fetus (strain 82-40).